The primary structure comprises 681 residues: T-box brain protein 1 (681 aa).

Disordered stretches follow at residues 43-83 (TDNL…RSKL) and 108-127 (SQSS…FPYP). Over residues 58 to 68 (GMTNQSDTDNF) the composition is skewed to polar residues. The span at 108-122 (SQSSQPQSAATAPSA) shows a compositional bias: low complexity. The T-box DNA-binding region spans 213 to 393 (LWLKFHRHQT…HNPFAKGFRD (181 aa)). Thr408 bears the Phosphothreonine mark. Ser410 is subject to Phosphoserine. The segment at 447 to 483 (PGAGAGPGPGTDRSVPHTNGLLSPQQAEDPGAPSPQR) is disordered. The segment covering 462–472 (PHTNGLLSPQQ) has biased composition (polar residues). Ser594 bears the Phosphoserine mark. The tract at residues 597 to 655 (APAAEDAKPKDLSDSSWIETPSSIKSIDSSDSGIYEQAKRRRISPADTPVSESSSPLKS) is disordered. Residues 618-628 (SSIKSIDSSDS) show a composition bias toward low complexity. A Phosphoserine modification is found at Ser640.

In terms of assembly, homodimer. Part of a complex containing CASK, TBR1 and TSPYL2; may modulate gene expression in response to neuronal synaptic activity. Forms homodimers. Interacts with FOXP2. Interacts with FOXP1. Interacts with BCL11A. Expressed in the developing and adult cortex. Expressed in the olfactory bulbs.

The protein localises to the nucleus. Functionally, transcriptional repressor involved in multiple aspects of cortical development, including neuronal migration, laminar and areal identity, and axonal projection. As transcriptional repressor of FEZF2, it blocks the formation of the corticospinal (CS) tract from layer 6 projection neurons, thereby restricting the origin of CS axons specifically to layer 5 neurons. The protein is T-box brain protein 1 (Tbr1) of Mus musculus (Mouse).